The sequence spans 417 residues: Serine--tRNA ligase (417 aa).

232-234 contributes to the L-serine binding site; the sequence is TAE. ATP-binding positions include 263-265 and valine 279; that span reads RRE. Glutamate 286 provides a ligand contact to L-serine. 350–353 contributes to the ATP binding site; sequence EISS. Position 385 (serine 385) interacts with L-serine.

It belongs to the class-II aminoacyl-tRNA synthetase family. Type-1 seryl-tRNA synthetase subfamily. In terms of assembly, homodimer. The tRNA molecule binds across the dimer.

Its subcellular location is the cytoplasm. It carries out the reaction tRNA(Ser) + L-serine + ATP = L-seryl-tRNA(Ser) + AMP + diphosphate + H(+). The catalysed reaction is tRNA(Sec) + L-serine + ATP = L-seryl-tRNA(Sec) + AMP + diphosphate + H(+). Its pathway is aminoacyl-tRNA biosynthesis; selenocysteinyl-tRNA(Sec) biosynthesis; L-seryl-tRNA(Sec) from L-serine and tRNA(Sec): step 1/1. In terms of biological role, catalyzes the attachment of serine to tRNA(Ser). Is also able to aminoacylate tRNA(Sec) with serine, to form the misacylated tRNA L-seryl-tRNA(Sec), which will be further converted into selenocysteinyl-tRNA(Sec). This chain is Serine--tRNA ligase, found in Leptospira interrogans serogroup Icterohaemorrhagiae serovar copenhageni (strain Fiocruz L1-130).